The primary structure comprises 283 residues: Shikimate kinase (283 aa).

86–96 contributes to the ATP binding site; the sequence is PIKSGLSSSSA.

Belongs to the GHMP kinase family. Archaeal shikimate kinase subfamily.

The protein localises to the cytoplasm. It catalyses the reaction shikimate + ATP = 3-phosphoshikimate + ADP + H(+). The protein operates within metabolic intermediate biosynthesis; chorismate biosynthesis; chorismate from D-erythrose 4-phosphate and phosphoenolpyruvate: step 5/7. In Methanococcus maripaludis (strain C5 / ATCC BAA-1333), this protein is Shikimate kinase.